Reading from the N-terminus, the 335-residue chain is Legumin type B (335 aa).

Disordered stretches follow at residues 47–87 (PETQ…GNSV) and 102–155 (TEED…GRNG). Basic and acidic residues predominate over residues 105 to 118 (DTAKRLRSPRDKRN). Over residues 135-144 (QQEEEEEEEE) the composition is skewed to acidic residues. The Cupin type-1 domain maps to 167–314 (ENIAQPARAD…AFGLRQRQVT (148 aa)).

It belongs to the 11S seed storage protein (globulins) family. Hexamer; each subunit is composed of an acidic and a basic chain derived from a single precursor and linked by a disulfide bond.

Functionally, this protein found in the seeds of many leguminous and non-leguminous plants is the source of sulfur-containing amino acids in seed meals. This chain is Legumin type B (LEB2), found in Vicia faba (Broad bean).